The following is a 137-amino-acid chain: Phosphoribosyl-AMP cyclohydrolase (137 aa).

Asp-84 is a Mg(2+) binding site. Cys-85 is a binding site for Zn(2+). Asp-86 and Asp-88 together coordinate Mg(2+). Positions 101 and 108 each coordinate Zn(2+).

The protein belongs to the PRA-CH family. As to quaternary structure, homodimer. The cofactor is Mg(2+). It depends on Zn(2+) as a cofactor.

The protein localises to the cytoplasm. It catalyses the reaction 1-(5-phospho-beta-D-ribosyl)-5'-AMP + H2O = 1-(5-phospho-beta-D-ribosyl)-5-[(5-phospho-beta-D-ribosylamino)methylideneamino]imidazole-4-carboxamide. It functions in the pathway amino-acid biosynthesis; L-histidine biosynthesis; L-histidine from 5-phospho-alpha-D-ribose 1-diphosphate: step 3/9. Catalyzes the hydrolysis of the adenine ring of phosphoribosyl-AMP. The chain is Phosphoribosyl-AMP cyclohydrolase from Chlorobaculum tepidum (strain ATCC 49652 / DSM 12025 / NBRC 103806 / TLS) (Chlorobium tepidum).